The chain runs to 152 residues: Ferredoxin-thioredoxin reductase catalytic chain, chloroplastic (152 aa).

The transit peptide at 1 to 38 (MTSTVTTTVGCGGLPVRPLSTATRGRPRRCAVRAQAAG) directs the protein to the chloroplast. Residue Cys91 coordinates [4Fe-4S] cluster. Cys93 (nucleophile) is an active-site residue. The cysteines at positions 93 and 123 are disulfide-linked. Cys110, Cys112, and Cys121 together coordinate [4Fe-4S] cluster.

The protein belongs to the ferredoxin thioredoxin reductase beta subunit family. Heterodimer of subunit A (variable subunit) and subunit B (catalytic subunit). Heterodimeric FTR forms a complex with ferredoxin and thioredoxin. [4Fe-4S] cluster is required as a cofactor.

The protein localises to the plastid. The protein resides in the chloroplast. The enzyme catalyses [thioredoxin]-disulfide + 2 reduced [2Fe-2S]-[ferredoxin] + 2 H(+) = [thioredoxin]-dithiol + 2 oxidized [2Fe-2S]-[ferredoxin]. Functionally, catalytic subunit of the ferredoxin-thioredoxin reductase (FTR), which catalyzes the two-electron reduction of thioredoxins by the electrons provided by reduced ferredoxin. This chain is Ferredoxin-thioredoxin reductase catalytic chain, chloroplastic (FTRC), found in Zea mays (Maize).